A 308-amino-acid chain; its full sequence is 3'(2'),5'-bisphosphate nucleotidase 1 (308 aa).

N-acetylalanine is present on A2. D51 (proton acceptor) is an active-site residue. The Mg(2+) site is built by E74, D117, L119, and D120. The active-site Proton acceptor is the T122. T122 is modified (phosphothreonine). AMP-binding residues include T195, H198, G220, and K224. At S240 the chain carries Phosphoserine. The residue at position 244 (K244) is an N6-succinyllysine. Mg(2+) is bound at residue D247.

Belongs to the inositol monophosphatase superfamily. Requires Mg(2+) as cofactor. As to expression, highly expressed in kidney, liver, pancreas and heart. Detected at lower levels in brain, placenta, lung and skeletal muscle.

The catalysed reaction is adenosine 3',5'-bisphosphate + H2O = AMP + phosphate. It carries out the reaction adenosine 2',5'-bisphosphate + H2O = AMP + phosphate. It catalyses the reaction 3'-phosphoadenylyl sulfate + H2O = adenosine 5'-phosphosulfate + phosphate. The enzyme catalyses 1D-myo-inositol 1,4-bisphosphate + H2O = 1D-myo-inositol 4-phosphate + phosphate. The catalysed reaction is 1D-myo-inositol 1,3,4-trisphosphate + H2O = 1D-myo-inositol 3,4-bisphosphate + phosphate. Is very sensitive to inhibition by Li(+) (IC(50)=0.3 mM for hydrolysis of PAP; IC(50)=0.6 mM for hydrolysis of inositol-1,4-bis-phosphate). Is not affected by high Na(+) concentrations. Its function is as follows. Phosphatase that converts 3'(2')-phosphoadenosine 5'-phosphate (PAP) to AMP and inositol 1,4-bisphosphate (Ins(1,4)P2) to inositol 4-phosphate. Is also able to hydrolyze adenosine 3'-phosphate 5'-phosphosulfate (PAPS) to adenosine 5'-phosphosulfate (APS). Probably prevents the toxic accumulation of PAP, a compound which inhibits a variety of proteins, including PAPS-utilizing enzymes such as sulfotransferases, and RNA processing enzymes. Could also play a role in inositol recycling and phosphoinositide metabolism. Is not active on 3'-AMP, inositol-1-phosphate and inositol-1,4,5-triphosphate. This Homo sapiens (Human) protein is 3'(2'),5'-bisphosphate nucleotidase 1 (BPNT1).